A 95-amino-acid chain; its full sequence is Synaptobrevin-A (95 aa).

Residues 1-70 lie on the Cytoplasmic side of the membrane; that stretch reads MSEPVNKVKQ…KRLMWCRNIK (70 aa). The v-SNARE coiled-coil homology domain occupies 7 to 67; it reads KVKQTQQQVD…NEIKRLMWCR (61 aa). The chain crosses the membrane as a helical; Anchor for type IV membrane protein span at residues 71–91; the sequence is LTLIIIAVVVLLLVVIIVPIV. The Vesicular segment spans residues 92-95; sequence LKFT.

This sequence belongs to the synaptobrevin family.

It localises to the cytoplasmic vesicle. Its subcellular location is the secretory vesicle membrane. Functionally, involved in the targeting and/or fusion of transport vesicles to their target membrane. The polypeptide is Synaptobrevin-A (sybA) (Dictyostelium discoideum (Social amoeba)).